The chain runs to 406 residues: Corticosteroid-binding globulin (406 aa).

The signal sequence occupies residues Met1–Ala22. Asn31 and Asn96 each carry an N-linked (GlcNAc...) asparagine glycan. Gln255 is a binding site for cortisol. N-linked (GlcNAc...) asparagine glycosylation is present at Asn261. Asp287 provides a ligand contact to cortisol. Asn331 and Asn360 each carry an N-linked (GlcNAc...) asparagine glycan. Trp394 is a binding site for cortisol.

This sequence belongs to the serpin family. As to expression, expressed by the liver; secreted in plasma.

It localises to the secreted. In terms of biological role, major transport protein for glucocorticoids and progestins in the blood of almost all vertebrate species. The protein is Corticosteroid-binding globulin (SERPINA6) of Saimiri sciureus (Common squirrel monkey).